The sequence spans 374 residues: DNA replication and repair protein RecF (374 aa).

Residue 34–41 (GDNGAGKT) participates in ATP binding.

Belongs to the RecF family.

It is found in the cytoplasm. Its function is as follows. The RecF protein is involved in DNA metabolism; it is required for DNA replication and normal SOS inducibility. RecF binds preferentially to single-stranded, linear DNA. It also seems to bind ATP. The chain is DNA replication and repair protein RecF from Rhizobium leguminosarum bv. trifolii (strain WSM2304).